The primary structure comprises 188 residues: Photosystem I assembly protein Ycf4 (188 aa).

The next 2 helical transmembrane spans lie at 26 to 46 and 68 to 88; these read YFWA…GLSS and LVMG…WFVI.

The protein belongs to the Ycf4 family.

The protein resides in the cellular thylakoid membrane. Seems to be required for the assembly of the photosystem I complex. This chain is Photosystem I assembly protein Ycf4, found in Synechococcus elongatus (strain ATCC 33912 / PCC 7942 / FACHB-805) (Anacystis nidulans R2).